Reading from the N-terminus, the 455-residue chain is uncharacterized protein (455 aa).

Positions 1-27 (MSQRQQFQFLLSFLILIFLKFIIQIRC) are cleaved as a signal peptide. The Extracellular segment spans residues 29–434 (ESNGVIIIKN…GDDENLINSS (406 aa)). Asn136, Asn148, Asn210, and Asn298 each carry an N-linked (GlcNAc...) asparagine glycan. The interval 383 to 402 (SSSTTSTTSSSSSSSSSTTT) is disordered. N-linked (GlcNAc...) asparagine glycosylation is found at Asn421 and Asn432. Residues 435-455 (SVIKFSTPIIMIIIILINIKF) traverse the membrane as a helical segment.

The protein resides in the membrane. This is an uncharacterized protein from Dictyostelium discoideum (Social amoeba).